The following is a 234-amino-acid chain: Putative B3 domain-containing protein At2g18810 (234 aa).

The interval 55-88 is disordered; it reads CKNQDPEQNPNRVASSPSLCHVKSKRPQKGVSNK. A compositionally biased stretch (polar residues) spans 60–72; it reads PEQNPNRVASSPS. The segment at residues 87 to 185 is a DNA-binding region (TF-B3); the sequence is NKPILDMDFL…MLFFALVLSD (99 aa).

Its subcellular location is the nucleus. This is Putative B3 domain-containing protein At2g18810 from Arabidopsis thaliana (Mouse-ear cress).